The chain runs to 393 residues: Probable pectinesterase 8 (393 aa).

The N-terminal stretch at 1 to 19 is a signal peptide; that stretch reads MKIISLSISIGIAIIAVLA. Residues Asn-100, Asn-113, Asn-140, Asn-156, and Asn-163 are each glycosylated (N-linked (GlcNAc...) asparagine). A substrate-binding site is contributed by Thr-165. N-linked (GlcNAc...) asparagine glycosylation occurs at Asn-182. Gln-200 is a substrate binding site. Asp-223 acts as the Proton donor in catalysis. The Nucleophile role is filled by Asp-244. An N-linked (GlcNAc...) asparagine glycan is attached at Asn-295. Residue Arg-308 participates in substrate binding. N-linked (GlcNAc...) asparagine glycans are attached at residues Asn-350, Asn-369, and Asn-378.

The protein belongs to the pectinesterase family. In terms of tissue distribution, expressed in siliques.

Its subcellular location is the secreted. The protein localises to the cell wall. The catalysed reaction is [(1-&gt;4)-alpha-D-galacturonosyl methyl ester](n) + n H2O = [(1-&gt;4)-alpha-D-galacturonosyl](n) + n methanol + n H(+). It functions in the pathway glycan metabolism; pectin degradation; 2-dehydro-3-deoxy-D-gluconate from pectin: step 1/5. Its function is as follows. Acts in the modification of cell walls via demethylesterification of cell wall pectin. This chain is Probable pectinesterase 8 (PME8), found in Arabidopsis thaliana (Mouse-ear cress).